Here is a 389-residue protein sequence, read N- to C-terminus: Succinate--CoA ligase [ADP-forming] subunit beta (389 aa).

The 228-residue stretch at 9-236 folds into the ATP-grasp domain; sequence KELFAKHEVP…KDATDPLELK (228 aa). ATP is bound by residues lysine 45, 52 to 54, serine 94, and glutamate 99; that span reads GRG. Residues asparagine 191 and aspartate 205 each contribute to the Mg(2+) site. Substrate-binding positions include asparagine 256 and 318 to 320; that span reads GIT.

Belongs to the succinate/malate CoA ligase beta subunit family. As to quaternary structure, heterotetramer of two alpha and two beta subunits. It depends on Mg(2+) as a cofactor.

The enzyme catalyses succinate + ATP + CoA = succinyl-CoA + ADP + phosphate. The catalysed reaction is GTP + succinate + CoA = succinyl-CoA + GDP + phosphate. It functions in the pathway carbohydrate metabolism; tricarboxylic acid cycle; succinate from succinyl-CoA (ligase route): step 1/1. Functionally, succinyl-CoA synthetase functions in the citric acid cycle (TCA), coupling the hydrolysis of succinyl-CoA to the synthesis of either ATP or GTP and thus represents the only step of substrate-level phosphorylation in the TCA. The beta subunit provides nucleotide specificity of the enzyme and binds the substrate succinate, while the binding sites for coenzyme A and phosphate are found in the alpha subunit. In Rhodococcus opacus (strain B4), this protein is Succinate--CoA ligase [ADP-forming] subunit beta.